The sequence spans 294 residues: Nucleotide-binding protein CA_C0511 (294 aa).

ATP is bound at residue 8 to 15 (GLSGAGKT). 59-62 (DIRG) is a binding site for GTP.

The protein belongs to the RapZ-like family.

Its function is as follows. Displays ATPase and GTPase activities. The chain is Nucleotide-binding protein CA_C0511 from Clostridium acetobutylicum (strain ATCC 824 / DSM 792 / JCM 1419 / IAM 19013 / LMG 5710 / NBRC 13948 / NRRL B-527 / VKM B-1787 / 2291 / W).